The following is a 110-amino-acid chain: Acylphosphatase (110 aa).

An Acylphosphatase-like domain is found at arginine 20–proline 108. Catalysis depends on residues arginine 35 and asparagine 53.

The protein belongs to the acylphosphatase family.

It carries out the reaction an acyl phosphate + H2O = a carboxylate + phosphate + H(+). The protein is Acylphosphatase (acyP) of Pyrobaculum calidifontis (strain DSM 21063 / JCM 11548 / VA1).